Reading from the N-terminus, the 436-residue chain is Alpha-galactosidase mel1 (436 aa).

Positions Met-1–Gly-24 are cleaved as a signal peptide. A disulfide bridge connects residues Cys-45 and Cys-77. Asn-84 is a glycosylation site (N-linked (GlcNAc...) asparagine). A disulfide bridge connects residues Cys-126 and Cys-156. Asp-154 functions as the Nucleophile in the catalytic mechanism. Asn-180 carries an N-linked (GlcNAc...) asparagine glycan. Asp-214 functions as the Proton donor in the catalytic mechanism.

Belongs to the glycosyl hydrolase 27 family.

It is found in the endoplasmic reticulum lumen. The protein localises to the secreted. The catalysed reaction is Hydrolysis of terminal, non-reducing alpha-D-galactose residues in alpha-D-galactosides, including galactose oligosaccharides, galactomannans and galactolipids.. Secreted alpha-galactosidase required for catabolic conversion of melibiose to glucose and galactose. This is Alpha-galactosidase mel1 (mel1) from Schizosaccharomyces pombe (strain 972 / ATCC 24843) (Fission yeast).